The sequence spans 391 residues: Chorismate synthase (391 aa).

Position 48 (Arg-48) interacts with NADP(+). Residues 126-128, Gly-287, 302-306, and Arg-329 contribute to the FMN site; these read RSS and KPTSS.

Belongs to the chorismate synthase family. It depends on FMNH2 as a cofactor.

The enzyme catalyses 5-O-(1-carboxyvinyl)-3-phosphoshikimate = chorismate + phosphate. It functions in the pathway metabolic intermediate biosynthesis; chorismate biosynthesis; chorismate from D-erythrose 4-phosphate and phosphoenolpyruvate: step 7/7. Functionally, catalyzes the anti-1,4-elimination of the C-3 phosphate and the C-6 proR hydrogen from 5-enolpyruvylshikimate-3-phosphate (EPSP) to yield chorismate, which is the branch point compound that serves as the starting substrate for the three terminal pathways of aromatic amino acid biosynthesis. This reaction introduces a second double bond into the aromatic ring system. The chain is Chorismate synthase from Sulfolobus acidocaldarius (strain ATCC 33909 / DSM 639 / JCM 8929 / NBRC 15157 / NCIMB 11770).